The primary structure comprises 522 residues: MKDTLPSATQVLKEAFDTLDSALENFSPVLAVQHVGWVEYIGKGIARVGGLPGVRCEELLAFPGGLLGLALDADEDQVGVVLFGDYTHLQAGDEVRRTGRVLDVPVGDGLIGRVVNPVGRCLDGGKPVAFQRQLPVERPAPPIMDRLPVTQPLMTGIKVIDALIPIGRGQRELILGDRQTGKTAIAIDAIINQRDQDVVCIYCAIGQRAASVAGVVTELRNCGALDYTIVVVAEGDAPPGLQYIAPYAATSMAEHFMEHGRDVLIVYDDLTRHARAYREISLLLRRPPGREAFPGDIFYVHSRLLERATHLNEPRGGGSLTALPIIETEAQNLSAYIPTNLISITDGQIYLSPELFQKGLLPSVDVGKSVSRVGGKTQLAAYRAVAGDLRLTYAQFEELEAFARFGTRLDEETRQVLHRGRRVRAILKQTQSSPRTAPQQVLVLHSLNSGVFDTVDEEALPAAEQAICAAVSEIPEIVDKILQGKTLSQEDLDVMHTVAKRVTRPFIKLGEEGHAGAAGDAT.

G176–T183 provides a ligand contact to ATP.

This sequence belongs to the ATPase alpha/beta chains family. In terms of assembly, F-type ATPases have 2 components, CF(1) - the catalytic core - and CF(0) - the membrane proton channel. CF(1) has five subunits: alpha(3), beta(3), gamma(1), delta(1), epsilon(1). CF(0) has three main subunits: a(1), b(2) and c(9-12). The alpha and beta chains form an alternating ring which encloses part of the gamma chain. CF(1) is attached to CF(0) by a central stalk formed by the gamma and epsilon chains, while a peripheral stalk is formed by the delta and b chains.

It localises to the cell inner membrane. It catalyses the reaction ATP + H2O + 4 H(+)(in) = ADP + phosphate + 5 H(+)(out). Functionally, produces ATP from ADP in the presence of a proton gradient across the membrane. The alpha chain is a regulatory subunit. The protein is ATP synthase subunit alpha 2 of Syntrophotalea carbinolica (strain DSM 2380 / NBRC 103641 / GraBd1) (Pelobacter carbinolicus).